Reading from the N-terminus, the 178-residue chain is ATP-dependent protease subunit HslV (178 aa).

The active site involves threonine 2. Positions 159, 162, and 165 each coordinate Na(+).

This sequence belongs to the peptidase T1B family. HslV subfamily. In terms of assembly, a double ring-shaped homohexamer of HslV is capped on each side by a ring-shaped HslU homohexamer. The assembly of the HslU/HslV complex is dependent on binding of ATP.

It is found in the cytoplasm. It catalyses the reaction ATP-dependent cleavage of peptide bonds with broad specificity.. Its activity is regulated as follows. Allosterically activated by HslU binding. Functionally, protease subunit of a proteasome-like degradation complex believed to be a general protein degrading machinery. This Buchnera aphidicola subsp. Cinara cedri (strain Cc) protein is ATP-dependent protease subunit HslV.